The sequence spans 415 residues: Chorismate synthase (415 aa).

Residues 43 to 72 are disordered; sequence EDLDRRKPGQSMITTSRGEPDKVSIKSGLQ. Residue R48 participates in NADP(+) binding. FMN contacts are provided by residues 125-127, G304, 319-323, and R346; these read RSS and HAPVS. The segment at 262–310 is disordered; the sequence is TDYTEDWEFGESEATASENASGDEPRARGDPKPVGNDHGGIQGGITTGD. Over residues 298-307 the composition is skewed to gly residues; the sequence is DHGGIQGGIT. The segment covering 379–393 has biased composition (basic and acidic residues); it reads PDRLDDRPGEYDTDY. A disordered region spans residues 379–415; that stretch reads PDRLDDRPGEYDTDYHPSSPRNDPEDADTHATTVDED.

The protein belongs to the chorismate synthase family. FMNH2 is required as a cofactor.

It carries out the reaction 5-O-(1-carboxyvinyl)-3-phosphoshikimate = chorismate + phosphate. The protein operates within metabolic intermediate biosynthesis; chorismate biosynthesis; chorismate from D-erythrose 4-phosphate and phosphoenolpyruvate: step 7/7. Functionally, catalyzes the anti-1,4-elimination of the C-3 phosphate and the C-6 proR hydrogen from 5-enolpyruvylshikimate-3-phosphate (EPSP) to yield chorismate, which is the branch point compound that serves as the starting substrate for the three terminal pathways of aromatic amino acid biosynthesis. This reaction introduces a second double bond into the aromatic ring system. The polypeptide is Chorismate synthase (Halomicrobium mukohataei (strain ATCC 700874 / DSM 12286 / JCM 9738 / NCIMB 13541) (Haloarcula mukohataei)).